The primary structure comprises 151 residues: Macrodomain Ter protein (151 aa).

It belongs to the MatP family. As to quaternary structure, homodimer.

It is found in the cytoplasm. Functionally, required for spatial organization of the terminus region of the chromosome (Ter macrodomain) during the cell cycle. Prevents early segregation of duplicated Ter macrodomains during cell division. Binds specifically to matS, which is a 13 bp signature motif repeated within the Ter macrodomain. The chain is Macrodomain Ter protein from Photorhabdus laumondii subsp. laumondii (strain DSM 15139 / CIP 105565 / TT01) (Photorhabdus luminescens subsp. laumondii).